Here is a 210-residue protein sequence, read N- to C-terminus: ATP-dependent Clp protease proteolytic subunit (210 aa).

The active-site Nucleophile is Ser-113. His-138 is an active-site residue.

This sequence belongs to the peptidase S14 family. Fourteen ClpP subunits assemble into 2 heptameric rings which stack back to back to give a disk-like structure with a central cavity, resembling the structure of eukaryotic proteasomes.

The protein resides in the cytoplasm. The catalysed reaction is Hydrolysis of proteins to small peptides in the presence of ATP and magnesium. alpha-casein is the usual test substrate. In the absence of ATP, only oligopeptides shorter than five residues are hydrolyzed (such as succinyl-Leu-Tyr-|-NHMec, and Leu-Tyr-Leu-|-Tyr-Trp, in which cleavage of the -Tyr-|-Leu- and -Tyr-|-Trp bonds also occurs).. Its function is as follows. Cleaves peptides in various proteins in a process that requires ATP hydrolysis. Has a chymotrypsin-like activity. Plays a major role in the degradation of misfolded proteins. The chain is ATP-dependent Clp protease proteolytic subunit from Marinomonas sp. (strain MWYL1).